The chain runs to 85 residues: Large ribosomal subunit protein bL27 (85 aa).

The tract at residues 1 to 25 is disordered; that stretch reads MAHKKAGSSSKNGRDSNPQYLGVKR. Over residues 7-19 the composition is skewed to polar residues; it reads GSSSKNGRDSNPQ.

The protein belongs to the bacterial ribosomal protein bL27 family.

The polypeptide is Large ribosomal subunit protein bL27 (Micrococcus luteus (strain ATCC 4698 / DSM 20030 / JCM 1464 / CCM 169 / CCUG 5858 / IAM 1056 / NBRC 3333 / NCIMB 9278 / NCTC 2665 / VKM Ac-2230) (Micrococcus lysodeikticus)).